Here is a 496-residue protein sequence, read N- to C-terminus: N-acetylmuramoyl-L-alanine amidase LytC (496 aa).

A signal peptide spans 1–24; that stretch reads MRSYIKVLTMCFLGLILFVPTALA. Tandem repeats lie at residues 30–128, 129–222, and 223–318. A 3 X tandem repeats region spans residues 30-318; sequence RVGGSNRYGT…VANQLKNPVV (289 aa). Residues 322–490 enclose the MurNAc-LAA domain; sequence IFIDPGHGDQ…DKAAQAIHDG (169 aa).

This sequence belongs to the N-acetylmuramoyl-L-alanine amidase 3 family.

It is found in the secreted. Its subcellular location is the cell wall. The catalysed reaction is Hydrolyzes the link between N-acetylmuramoyl residues and L-amino acid residues in certain cell-wall glycopeptides.. Autolysins are cell wall hydrolases involved in some important biological processes such as cell separation, cell-wall turnover, competence for genetic transformation, formation of the flagella - in particular of its basal body - and sporulation. Has a high affinity for teichoic acid-endowed peptidoglycan. LytC is required for efficient swarming motility but not at the level of cell separation or flagellum biosynthesis. Rather, LytC appears to be important for proper flagellar function. The sequence is that of N-acetylmuramoyl-L-alanine amidase LytC (lytC) from Bacillus subtilis (strain 168).